We begin with the raw amino-acid sequence, 61 residues long: Sperm protamine P1 (61 aa).

Residues 1–61 (MARFRRSRSR…RSSRRSRRRN (61 aa)) form a disordered region.

It belongs to the protamine P1 family. In terms of tissue distribution, testis.

It localises to the nucleus. Its subcellular location is the chromosome. Protamines substitute for histones in the chromatin of sperm during the haploid phase of spermatogenesis. They compact sperm DNA into a highly condensed, stable and inactive complex. This chain is Sperm protamine P1 (PRM1), found in Ornithorhynchus anatinus (Duckbill platypus).